A 123-amino-acid chain; its full sequence is MVQWKTLTKRSQGANFEQKAREFLERNGLKFIAANQQFKCGELDLIMRQGDTFVFVEVRQRKSNRFGSAVESIDYRKQQKWLDAANMWLFTRHKQSLDTANCRFDVVAFEGNDPPLWIPNFLG.

Belongs to the UPF0102 family.

This Actinobacillus pleuropneumoniae serotype 7 (strain AP76) protein is UPF0102 protein APP7_1414.